A 257-amino-acid chain; its full sequence is Imidazole glycerol phosphate synthase subunit HisF (257 aa).

Residues D11 and D130 contribute to the active site.

Belongs to the HisA/HisF family. As to quaternary structure, heterodimer of HisH and HisF.

Its subcellular location is the cytoplasm. The catalysed reaction is 5-[(5-phospho-1-deoxy-D-ribulos-1-ylimino)methylamino]-1-(5-phospho-beta-D-ribosyl)imidazole-4-carboxamide + L-glutamine = D-erythro-1-(imidazol-4-yl)glycerol 3-phosphate + 5-amino-1-(5-phospho-beta-D-ribosyl)imidazole-4-carboxamide + L-glutamate + H(+). It functions in the pathway amino-acid biosynthesis; L-histidine biosynthesis; L-histidine from 5-phospho-alpha-D-ribose 1-diphosphate: step 5/9. In terms of biological role, IGPS catalyzes the conversion of PRFAR and glutamine to IGP, AICAR and glutamate. The HisF subunit catalyzes the cyclization activity that produces IGP and AICAR from PRFAR using the ammonia provided by the HisH subunit. The polypeptide is Imidazole glycerol phosphate synthase subunit HisF (Pseudoalteromonas translucida (strain TAC 125)).